The chain runs to 546 residues: Chaperonin GroEL (546 aa).

Residues 30–33 (TLGP), K51, 87–91 (DGTTT), G415, 479–481 (NAA), and D495 contribute to the ATP site.

It belongs to the chaperonin (HSP60) family. In terms of assembly, forms a cylinder of 14 subunits composed of two heptameric rings stacked back-to-back. Interacts with the co-chaperonin GroES.

It is found in the cytoplasm. It carries out the reaction ATP + H2O + a folded polypeptide = ADP + phosphate + an unfolded polypeptide.. Functionally, together with its co-chaperonin GroES, plays an essential role in assisting protein folding. The GroEL-GroES system forms a nano-cage that allows encapsulation of the non-native substrate proteins and provides a physical environment optimized to promote and accelerate protein folding. In Xanthomonas axonopodis pv. citri (strain 306), this protein is Chaperonin GroEL.